Here is a 363-residue protein sequence, read N- to C-terminus: Protein-glutamate methylesterase/protein-glutamine glutaminase of group 3 operon (363 aa).

Residues 7–124 (RVLIVDDSAS…RQALLECSTR (118 aa)) enclose the Response regulatory domain. 4-aspartylphosphate is present on Asp-58. A CheB-type methylesterase domain is found at 166–357 (PTTERIVCIG…REIMLWYQAG (192 aa)). Residues Ser-177, His-203, and Asp-299 contribute to the active site.

It belongs to the CheB family. Phosphorylated by CheA. Phosphorylation of the N-terminal regulatory domain activates the methylesterase activity.

It localises to the cytoplasm. The catalysed reaction is [protein]-L-glutamate 5-O-methyl ester + H2O = L-glutamyl-[protein] + methanol + H(+). The enzyme catalyses L-glutaminyl-[protein] + H2O = L-glutamyl-[protein] + NH4(+). Functionally, involved in chemotaxis. Part of a chemotaxis signal transduction system that modulates chemotaxis in response to various stimuli. Catalyzes the demethylation of specific methylglutamate residues introduced into the chemoreceptors (methyl-accepting chemotaxis proteins or MCP) by CheR. Also mediates the irreversible deamidation of specific glutamine residues to glutamic acid. The protein is Protein-glutamate methylesterase/protein-glutamine glutaminase of group 3 operon of Bradyrhizobium diazoefficiens (strain JCM 10833 / BCRC 13528 / IAM 13628 / NBRC 14792 / USDA 110).